We begin with the raw amino-acid sequence, 207 residues long: Vexin (207 aa).

The disordered stretch occupies residues 55–102 (LELLPHRGDRRDPGDGRRFGRLQTARPPTAHPAKASARPVGISEPKTS). A compositionally biased stretch (basic and acidic residues) spans 58–72 (LPHRGDRRDPGDGRR).

Belongs to the vexin family.

It is found in the cell membrane. It localises to the nucleus. Functionally, required for neurogenesis in the neural plate and retina. Strongly cooperates with neural bHLH factors to promote neurogenesis. This is Vexin from Pongo abelii (Sumatran orangutan).